Reading from the N-terminus, the 183-residue chain is MKIRPDDQWRWYFDSEHSRVMLDLANGMVFRSRFLAKMLTDYAITMEEMPFSVDDAALYYAFEEHFRCINIASELRAELALNGVVAFRFMKPQMPKSWYFSSFSVMTKPEQGEIVQVRLQDCGTEVLFMVAEVGDSASLCLLAQQKLELSDRVMNFCDPIKIMNDRLMPYVEPTRETIYGRVI.

Belongs to the ZapC family. As to quaternary structure, interacts directly with FtsZ.

It localises to the cytoplasm. Its function is as follows. Contributes to the efficiency of the cell division process by stabilizing the polymeric form of the cell division protein FtsZ. Acts by promoting interactions between FtsZ protofilaments and suppressing the GTPase activity of FtsZ. This Xenorhabdus bovienii (strain SS-2004) (Xenorhabdus nematophila subsp. bovienii) protein is Cell division protein ZapC.